The chain runs to 410 residues: Elongation factor Tu, chloroplastic (410 aa).

The 206-residue stretch at 10–215 folds into the tr-type G domain; it reads KPHINIGTIG…MVDKYFPTPE (206 aa). Positions 19 to 26 are G1; that stretch reads GHVDHGKT. GTP is bound at residue 19 to 26; sequence GHVDHGKT. Threonine 26 provides a ligand contact to Mg(2+). Residues 61–65 are G2; it reads GITIN. Residues 82–85 form a G3 region; the sequence is DCPG. GTP is bound by residues 82 to 86 and 137 to 140; these read DCPGH and NKAD. The interval 137–140 is G4; sequence NKAD. Positions 175–177 are G5; the sequence is SAL.

Belongs to the TRAFAC class translation factor GTPase superfamily. Classic translation factor GTPase family. EF-Tu/EF-1A subfamily.

Its subcellular location is the plastid. The protein localises to the chloroplast. The enzyme catalyses GTP + H2O = GDP + phosphate + H(+). GTP hydrolase that promotes the GTP-dependent binding of aminoacyl-tRNA to the A-site of ribosomes during protein biosynthesis. In Cyanidium caldarium (Red alga), this protein is Elongation factor Tu, chloroplastic (tufA).